Reading from the N-terminus, the 457-residue chain is Phosphoglucosamine mutase (457 aa).

The Phosphoserine intermediate role is filled by S106. Residues S106, D245, D247, and D249 each coordinate Mg(2+). S106 carries the phosphoserine modification.

The protein belongs to the phosphohexose mutase family. Requires Mg(2+) as cofactor. Activated by phosphorylation.

The enzyme catalyses alpha-D-glucosamine 1-phosphate = D-glucosamine 6-phosphate. Its function is as follows. Catalyzes the conversion of glucosamine-6-phosphate to glucosamine-1-phosphate. In Methylibium petroleiphilum (strain ATCC BAA-1232 / LMG 22953 / PM1), this protein is Phosphoglucosamine mutase.